Reading from the N-terminus, the 720-residue chain is Pro-neuregulin-3, membrane-bound isoform (720 aa).

The Extracellular segment spans residues 1-360; the sequence is MSEGAAAASP…MESEEVYQRQ (360 aa). Disordered regions lie at residues 28 to 48, 119 to 223, and 246 to 280; these read AAAAAAAGGGPDGGGEGAAEP, SSFP…AMPS, and PFQDAASSSSSSSSSATTTTPETSTSPKFHTTTYS. Gly residues predominate over residues 34–44; sequence AGGGPDGGGEG. Positions 127–148 are enriched in low complexity; the sequence is TTTTTTSTTSPATPSAGGAASS. A compositionally biased stretch (polar residues) spans 149–163; that stretch reads RTPNRISTRLTTITR. Low complexity-rich tracts occupy residues 187-205 and 250-271; these read TAAPATVPSTTAPFFSSST and AASSSSSSSSSATTTTPETSTS. The EGF-like domain occupies 286–329; sequence HFKPCRDKDLAYCLNDGECFVIETLTGSHKHCRCKEGYQGVRCD. Intrachain disulfides connect Cys290–Cys304, Cys298–Cys317, and Cys319–Cys328. A helical membrane pass occupies residues 361 to 381; it reads VLSISCIIFGIVIVGMFCAAF. Topologically, residues 382–720 are cytoplasmic; the sequence is YFKSKKQAKQ…EIQRDSALTK (339 aa). A disordered region spans residues 451 to 481; it reads PQSFPEVPSPDRGSQSVKHHRSLSSCCSPGQ.

Belongs to the neuregulin family. As to quaternary structure, interacts with ERBB4. In terms of processing, proteolytic cleavage close to the plasma membrane on the external face leads to the release of the soluble growth factor form. Extensive glycosylation precedes the proteolytic cleavage. Isoform 3 is glycosylated. As to expression, highly expressed in most regions of the brain with the exception of corpus callosum. Expressed at lower level in testis. Not detected in heart, placenta, lung, liver, skeletal muscle, kidney, pancreas, spleen, thymus, prostate, ovary, small intestine, colon and peripheral blood leukocytes.

The protein resides in the cell membrane. Its subcellular location is the secreted. In terms of biological role, direct ligand for the ERBB4 tyrosine kinase receptor. Binding results in ligand-stimulated tyrosine phosphorylation and activation of the receptor. Does not bind to the EGF receptor, ERBB2 or ERBB3 receptors. May be a survival factor for oligodendrocytes. The sequence is that of Pro-neuregulin-3, membrane-bound isoform (NRG3) from Homo sapiens (Human).